Here is an 80-residue protein sequence, read N- to C-terminus: Iota-conotoxin-like r11c (80 aa).

A signal peptide spans 1 to 19; the sequence is MKLCLTFLLVLMILASVTG. A propeptide spanning residues 20 to 35 is cleaved from the precursor; sequence EKSSKHTLSRAARVKN. Pro38 and Pro47 each carry 4-hydroxyproline; partial. 4 cysteine pairs are disulfide-bonded: Cys41–Cys55, Cys48–Cys58, Cys54–Cys63, and Cys57–Cys72. At Pro65 the chain carries 4-hydroxyproline. Leu78 carries the post-translational modification D-leucine. A propeptide (removed by a carboxypeptidase) is located at residue Arg80.

The natural D-Leu form of the peptide is more potent than the synthetic L-Leu form. As to expression, expressed by the venom duct.

It is found in the secreted. Iota-conotoxins bind to voltage-gated sodium channels (Nav) and act as agonists by shifting the voltage-dependence of activation to more hyperpolarized levels. Causes circular motion, convulsions, copious urination, rigid paralysis and death upon intracranial injection into mice. Causes unbalanced swimming, swimming in diagonal and vertical motion and death, when injected intraperitoneally into goldfish. L-Leu and D-Leu forms are active on both nerve and muscle. This chain is Iota-conotoxin-like r11c, found in Conus radiatus (Rayed cone).